We begin with the raw amino-acid sequence, 231 residues long: Putative 3-methyladenine DNA glycosylase (231 aa).

This sequence belongs to the DNA glycosylase MPG family.

The polypeptide is Putative 3-methyladenine DNA glycosylase (Pseudomonas fluorescens (strain Pf0-1)).